The primary structure comprises 253 residues: uncharacterized protein (253 aa).

The protein belongs to the NAD(P)-dependent epimerase/dehydratase family.

This is an uncharacterized protein from Bacillus subtilis (strain 168).